Consider the following 366-residue polypeptide: Inhibin alpha chain (366 aa).

Residues 1 to 20 (MVSQRSLLLLLLLTLRDVDS) form the signal peptide. A propeptide spanning residues 21–63 (CQGPELVRELVLAKVKALFLDALGPPAMDGEGGDPGIRRLPRR) is cleaved from the precursor. A propeptide spans 64–233 (HAVGGFMHRT…APSAGERARR (170 aa)) (inhibin alpha N-terminal region). N-linked (GlcNAc...) asparagine glycosylation is found at Asn147 and Asn269. 3 disulfides stabilise this stretch: Cys263–Cys328, Cys292–Cys363, and Cys296–Cys365.

It belongs to the TGF-beta family. In terms of assembly, dimeric, linked by one or more disulfide bonds. Activin B is a dimer of alpha and beta-B. Inhibin A is a dimer of alpha and beta-A. Inhibin B is a dimer of alpha and beta-B. Interacts with TGFBR3L; this interaction regulates female fertility. In terms of processing, proteolytic processing yields a number of bioactive forms, consisting either solely of the mature alpha chain, of the most N-terminal propeptide linked through a disulfide bond to the mature alpha chain, or of the entire proprotein.

The protein localises to the secreted. In terms of biological role, inhibins and activins inhibit and activate, respectively, the secretion of follitropin by the pituitary gland. Inhibins/activins are involved in regulating a number of diverse functions such as hypothalamic and pituitary hormone secretion, gonadal hormone secretion, germ cell development and maturation, erythroid differentiation, insulin secretion, nerve cell survival, embryonic axial development or bone growth, depending on their subunit composition. Inhibins appear to oppose the functions of activins. Functionally, inhibin A is a dimer of alpha/INHA and beta-A/INHBA that functions as a feedback regulator in the hypothalamic-pituitary-gonadal (HPG) axis. Inhibits the secretion of FSH from the anterior pituitary gland by acting on pituitary gonadotrope cells. Antagonizes activin A by binding to the proteoglycan, betaglycan, and forming a stable complex with and, thereby, sequestering type II activin receptors while excluding type I receptor. Inhibin B is a dimer of alpha and beta-B that plays a crucial role in the regulation of the reproductive system by inhibiting the secretion of follicle-stimulating hormone (FSH) from the anterior pituitary gland. Thereby, maintains reproductive homeostasis in both males and females. Acts as a more potent suppressor of FSH release than inhibin A. Functions as competitive receptor antagonist binding activin type II receptors with high affinity in the presence of the TGF-beta type III coreceptor/TGFBR3L. The chain is Inhibin alpha chain (Inha) from Mus musculus (Mouse).